A 740-amino-acid chain; its full sequence is MTDSSTLAELSPDFQRIVEARHHDPFAVLGRHRRDNRDLIRAFLPQAEEVRVGSAGRVMERIAGTAIFECEVEAETTDLHYRLYWTDQTGQTHSFIDPYTFPPRLSDFDLYLFGEGRHWNIYRVLGAHPHSVDGIDGILFATWAPNAERISVVGEFNGWDGRRHPMRVRGASGVWELFIPELQPGLLYKFEIRNRAHGTIHLKSDPYGRQFELRPNTASIITRESGYAWNDADWLAQRKDWPWLHRPLSVYEMHAGSWKRDLEGGYLNYRDLAHELVDYVKSAGFSHIELMPVTEHPLDASWGYQTTGYFAPTSRFGTPDDFRYFVDHCHRNGIGVILDWVPAHFPKDAHGLARFDGTALYEHEDPRLGEHRDWGTLIYNYGRNEVKNFLLGSALFWLEEFHLDGLRVDAVASMLYLDYSRQPGDWIPNKYGGNENLEAIAFLRDLNTVVHQQFPGVLVIAEESTAWPQVTRPTWTGGLGFSMKWNMGWMHDILVYMGKDPVHRHYHHDQLTFGLLYAFTENFVLPFSHDEVVHGKGSMLAKMPGDEWRRFANLRVLYTMMFTYPGKKLLFMGCEFAQTGEWNHTTALDWPLLESNLHKGVLHLVSDLNRLYQSTSALYAYDFESQGFEWIDSHDAAQSVISYVRRDDDSHVVVVLNFTPVPRHNYRIGVPEPVGYREVFNSDAECYGGANLGNWEIKTESVEWMGRAQSVVLTLPPLAGIVLAPVAPSATPDCGTPGDE.

The active-site Nucleophile is Asp-409. The Proton donor role is filled by Glu-462.

It belongs to the glycosyl hydrolase 13 family. GlgB subfamily. In terms of assembly, monomer.

It carries out the reaction Transfers a segment of a (1-&gt;4)-alpha-D-glucan chain to a primary hydroxy group in a similar glucan chain.. It functions in the pathway glycan biosynthesis; glycogen biosynthesis. Its function is as follows. Catalyzes the formation of the alpha-1,6-glucosidic linkages in glycogen by scission of a 1,4-alpha-linked oligosaccharide from growing alpha-1,4-glucan chains and the subsequent attachment of the oligosaccharide to the alpha-1,6 position. The protein is 1,4-alpha-glucan branching enzyme GlgB of Methylococcus capsulatus (strain ATCC 33009 / NCIMB 11132 / Bath).